The sequence spans 91 residues: Signal recognition particle 19 kDa protein (91 aa).

Belongs to the SRP19 family. As to quaternary structure, part of the signal recognition particle protein translocation system, which is composed of SRP and FtsY. Archaeal SRP consists of a 7S RNA molecule of 300 nucleotides and two protein subunits: SRP54 and SRP19.

The protein localises to the cytoplasm. Its function is as follows. Involved in targeting and insertion of nascent membrane proteins into the cytoplasmic membrane. Binds directly to 7S RNA and mediates binding of the 54 kDa subunit of the SRP. The protein is Signal recognition particle 19 kDa protein of Methanothermobacter thermautotrophicus (strain ATCC 29096 / DSM 1053 / JCM 10044 / NBRC 100330 / Delta H) (Methanobacterium thermoautotrophicum).